The primary structure comprises 152 residues: Arginine repressor (152 aa).

It belongs to the ArgR family.

The protein localises to the cytoplasm. Its pathway is amino-acid biosynthesis; L-arginine biosynthesis [regulation]. In terms of biological role, regulates arginine biosynthesis genes. In Lactococcus lactis subsp. cremoris (strain MG1363), this protein is Arginine repressor.